Reading from the N-terminus, the 82-residue chain is Putative membrane protein insertion efficiency factor (82 aa).

Positions 63–82 (GGFDPVPLKKDKNSKTTHHH) are disordered.

Belongs to the UPF0161 family.

It localises to the cell membrane. Could be involved in insertion of integral membrane proteins into the membrane. In Staphylococcus epidermidis (strain ATCC 35984 / DSM 28319 / BCRC 17069 / CCUG 31568 / BM 3577 / RP62A), this protein is Putative membrane protein insertion efficiency factor.